Here is a 1385-residue protein sequence, read N- to C-terminus: Defecation cycle abnormal dec-7 (1385 aa).

The signal sequence occupies residues 1–19 (MWTARHAVALLVVLTYAYS). A glycan (N-linked (GlcNAc...) asparagine) is linked at Asn156. Positions 234-262 (SQTNYGAPNYQQAGAQSAANQQFSNPSQY) are disordered. Residues 242–261 (NYQQAGAQSAANQQFSNPSQ) are compositionally biased toward low complexity. Positions 285 to 450 (QIYGKRKKRQ…GRWIHRVDEV (166 aa)) constitute an NIDO domain. Residues Asn313, Asn386, Asn413, Asn458, Asn480, Asn562, and Asn583 are each glycosylated (N-linked (GlcNAc...) asparagine). Positions 681–840 (GRNWPIDMCI…DHCEFYYWRR (160 aa)) constitute an AMOP domain. The region spanning 852 to 1088 (AAGYIYGEPH…FWKIDGTNDK (237 aa)) is the VWFD domain. N-linked (GlcNAc...) asparagine glycosylation is found at Asn909, Asn921, Asn975, Asn1009, and Asn1124. The Sushi domain occupies 1179–1238 (ISCGPLLKKEGVVKTPPAANYLDGDKVVFSCKPKYYIHGDIERVCRNGTWSPGWWAWCRD). 2 cysteine pairs are disulfide-bonded: Cys1181–Cys1223 and Cys1209–Cys1236. Asn1225 carries N-linked (GlcNAc...) asparagine glycosylation. The chain crosses the membrane as a helical span at residues 1251 to 1271 (LLSIFGISLIFVIFFCILWNI). A disordered region spans residues 1321–1385 (MNQPSRPIPS…GNMRFETSAI (65 aa)).

As to expression, highly expressed in the intestinal epithelia.

Its subcellular location is the membrane. It localises to the cell junction. May negatively regulate activity of innexin gap junction protein inx-16, thereby mediating the rhythmic frequency of the defecation motor program. Required for the clustering of inx-16 to the cell-cell junction of the intestinal epithelia. Probably dispensable for intestinal integrity. May be a cytokine receptor. The chain is Defecation cycle abnormal dec-7 from Caenorhabditis elegans.